The primary structure comprises 73 residues: Cell division protein ZapB (73 aa).

The stretch at 3–66 (LELLSKLETK…SWNEKVTGLV (64 aa)) forms a coiled coil.

This sequence belongs to the ZapB family. Homodimer. The ends of the coiled-coil dimer bind to each other, forming polymers. Interacts with FtsZ.

The protein localises to the cytoplasm. Functionally, non-essential, abundant cell division factor that is required for proper Z-ring formation. It is recruited early to the divisome by direct interaction with FtsZ, stimulating Z-ring assembly and thereby promoting cell division earlier in the cell cycle. Its recruitment to the Z-ring requires functional FtsA or ZipA. This Shewanella baltica (strain OS223) protein is Cell division protein ZapB.